A 414-amino-acid polypeptide reads, in one-letter code: Serine hydroxymethyltransferase (414 aa).

(6S)-5,6,7,8-tetrahydrofolate is bound by residues Leu-121 and 125–127 (GHL). An N6-(pyridoxal phosphate)lysine modification is found at Lys-229.

Belongs to the SHMT family. Homodimer. It depends on pyridoxal 5'-phosphate as a cofactor.

The protein resides in the cytoplasm. It carries out the reaction (6R)-5,10-methylene-5,6,7,8-tetrahydrofolate + glycine + H2O = (6S)-5,6,7,8-tetrahydrofolate + L-serine. The protein operates within one-carbon metabolism; tetrahydrofolate interconversion. It functions in the pathway amino-acid biosynthesis; glycine biosynthesis; glycine from L-serine: step 1/1. In terms of biological role, catalyzes the reversible interconversion of serine and glycine with tetrahydrofolate (THF) serving as the one-carbon carrier. This reaction serves as the major source of one-carbon groups required for the biosynthesis of purines, thymidylate, methionine, and other important biomolecules. Also exhibits THF-independent aldolase activity toward beta-hydroxyamino acids, producing glycine and aldehydes, via a retro-aldol mechanism. The polypeptide is Serine hydroxymethyltransferase (Herminiimonas arsenicoxydans).